The chain runs to 409 residues: Isocitrate dehydrogenase [NADP] 1 (409 aa).

NADP(+) is bound by residues lysine 75, threonine 78, threonine 80, and arginine 85. The Mn(2+) site is built by aspartate 255, aspartate 278, and aspartate 282. Positions 313, 314, 315, 318, and 331 each coordinate NADP(+).

This sequence belongs to the isocitrate and isopropylmalate dehydrogenases family. In terms of assembly, homodimer. It depends on Mg(2+) as a cofactor. The cofactor is Mn(2+).

It catalyses the reaction D-threo-isocitrate + NADP(+) = 2-oxoglutarate + CO2 + NADPH. Catalyzes the oxidative decarboxylation of isocitrate to 2-oxoglutarate and carbon dioxide with the concomitant reduction of NADP(+). This is Isocitrate dehydrogenase [NADP] 1 (icd) from Mycobacterium bovis (strain ATCC BAA-935 / AF2122/97).